A 542-amino-acid chain; its full sequence is Isocitrate lyase (542 aa).

102-104 (SGW) serves as a coordination point for substrate. D170 is a Mg(2+) binding site. Residue C208 is the Proton acceptor of the active site. Residues 209–210 (GH), R245, 428–432 (NLSPS), and T462 contribute to the substrate site.

It belongs to the isocitrate lyase/PEP mutase superfamily. Isocitrate lyase family. In terms of assembly, homotetramer. The cofactor is Mg(2+).

Its subcellular location is the glyoxysome. The enzyme catalyses D-threo-isocitrate = glyoxylate + succinate. It catalyses the reaction (2S,3R)-3-hydroxybutane-1,2,3-tricarboxylate = pyruvate + succinate. It participates in carbohydrate metabolism; glyoxylate cycle; (S)-malate from isocitrate: step 1/2. Catalyzes the formation of succinate and glyoxylate from isocitrate, a key step of the glyoxylate cycle, which operates as an anaplerotic route for replenishing the tricarboxylic acid cycle. Required for growth on ethanol or acetate, but dispensable when fermentable carbon sources are available. Also acts on 2-methylisocitrate. The sequence is that of Isocitrate lyase from Kluyveromyces lactis (strain ATCC 8585 / CBS 2359 / DSM 70799 / NBRC 1267 / NRRL Y-1140 / WM37) (Yeast).